A 248-amino-acid polypeptide reads, in one-letter code: MINKTRTTVDQSEIDHFSRIAAEWWNPQGKFRPLHKFNPTRLAYIKEKICLAFDRDPFSLAPFAGLKILDIGCGGGLLCEPMVRLGATVIGADAAQNNIEVAKIHATQSGLSIDYRATTAEKLADKGEKFDIILNMEIVEHVADVDLFISATAKMLKPQGLMFIATLNRTWKSWGLAIVGAEYILRWLPKGTHDYKKFLKPQELKKLLLTNSLKVIDELGITYNPLNDSWNRSKDMDVNYMLLVKRLQ.

S-adenosyl-L-methionine is bound by residues Arg-41, Gly-72, Asp-93, and Met-136.

Belongs to the methyltransferase superfamily. UbiG/COQ3 family.

It catalyses the reaction a 3-demethylubiquinol + S-adenosyl-L-methionine = a ubiquinol + S-adenosyl-L-homocysteine + H(+). It carries out the reaction a 3-(all-trans-polyprenyl)benzene-1,2-diol + S-adenosyl-L-methionine = a 2-methoxy-6-(all-trans-polyprenyl)phenol + S-adenosyl-L-homocysteine + H(+). It participates in cofactor biosynthesis; ubiquinone biosynthesis. Functionally, O-methyltransferase that catalyzes the 2 O-methylation steps in the ubiquinone biosynthetic pathway. The chain is Ubiquinone biosynthesis O-methyltransferase from Bartonella bacilliformis (strain ATCC 35685 / KC583 / Herrer 020/F12,63).